The chain runs to 506 residues: Apolipoprotein N-acyltransferase (506 aa).

The next 7 helical transmembrane spans lie at 10-30, 33-53, 57-77, 105-125, 139-159, 176-196, and 205-225; these read ANAKVLSRWLLFVGLGIAGWG, LALPPVSGWFLAFVGIVPLWW, VLAPLWAAIAGLCWGWGFYGS, IWLCLSSWGAVLSGSWALLMA, WGVTLWCALEALWSHSPLWWI, LAGPTTITAVVMTVNGLVTLS, and VGLAMTLVAAIALNGVLSVRV. A CN hydrolase domain is found at 238 to 473; that stretch reads IQGNIPTREK…FVIYAATIFR (236 aa). Glutamate 279 functions as the Proton acceptor in the catalytic mechanism. The active site involves lysine 336. The active-site Nucleophile is cysteine 385. The chain crosses the membrane as a helical span at residues 483 to 500; that stretch reads YGDWLLPLLLGMLSLSVL.

It belongs to the CN hydrolase family. Apolipoprotein N-acyltransferase subfamily.

The protein localises to the cell inner membrane. The enzyme catalyses N-terminal S-1,2-diacyl-sn-glyceryl-L-cysteinyl-[lipoprotein] + a glycerophospholipid = N-acyl-S-1,2-diacyl-sn-glyceryl-L-cysteinyl-[lipoprotein] + a 2-acyl-sn-glycero-3-phospholipid + H(+). The protein operates within protein modification; lipoprotein biosynthesis (N-acyl transfer). Catalyzes the phospholipid dependent N-acylation of the N-terminal cysteine of apolipoprotein, the last step in lipoprotein maturation. The sequence is that of Apolipoprotein N-acyltransferase from Thermosynechococcus vestitus (strain NIES-2133 / IAM M-273 / BP-1).